A 181-amino-acid polypeptide reads, in one-letter code: ADP-ribosylation factor 2-A (181 aa).

Residue G2 is the site of N-myristoyl glycine attachment. GTP contacts are provided by residues 24 to 31 (GLDAAGKT), 67 to 71 (DVGGQ), and 126 to 129 (NKQD).

It belongs to the small GTPase superfamily. Arf family.

It is found in the golgi apparatus. With respect to regulation, activated by AGD10. Its function is as follows. GTP-binding protein involved in protein trafficking; may modulate vesicle budding and uncoating within the Golgi apparatus. The chain is ADP-ribosylation factor 2-A (ARF2-A) from Arabidopsis thaliana (Mouse-ear cress).